Consider the following 331-residue polypeptide: DNA-directed RNA polymerase subunit alpha (331 aa).

Residues M1–N226 are alpha N-terminal domain (alpha-NTD). Residues L243–N331 form an alpha C-terminal domain (alpha-CTD) region.

This sequence belongs to the RNA polymerase alpha chain family. Homodimer. The RNAP catalytic core consists of 2 alpha, 1 beta, 1 beta' and 1 omega subunit. When a sigma factor is associated with the core the holoenzyme is formed, which can initiate transcription.

It carries out the reaction RNA(n) + a ribonucleoside 5'-triphosphate = RNA(n+1) + diphosphate. Its function is as follows. DNA-dependent RNA polymerase catalyzes the transcription of DNA into RNA using the four ribonucleoside triphosphates as substrates. The chain is DNA-directed RNA polymerase subunit alpha from Clavibacter sepedonicus (Clavibacter michiganensis subsp. sepedonicus).